Consider the following 725-residue polypeptide: Beta-adducin (725 aa).

The segment at 1 to 22 is disordered; the sequence is MSEDTVPEAASPPPSQGQHYFD. Serine 11 and serine 25 each carry phosphoserine. Threonine 55 carries the post-translational modification Phosphothreonine. Residues serine 60 and serine 344 each carry the phosphoserine modification. Residues 425 to 444 form an interaction with calmodulin region; that stretch reads KQQKEKTRWLNTPNTYLRVN. A disordered region spans residues 525 to 725; the sequence is AEKSRSPSTE…KSKKKEKVES (201 aa). 2 positions are modified to phosphoserine: serine 530 and serine 532. Residue threonine 533 is modified to Phosphothreonine. Serine 535 is subject to Phosphoserine. Phosphothreonine is present on threonine 561. Over residues 566-588 the composition is skewed to basic and acidic residues; the sequence is EEYKKEVERKKLEQEQEGEKDAA. Phosphoserine is present on residues serine 594, serine 598, serine 602, and serine 606. Over residues 596-621 the composition is skewed to polar residues; that stretch reads VKSTPASPVQSPTRAGTKSPAVSPSK. Position 612 is a phosphothreonine (threonine 612). Residues serine 614, serine 618, and serine 620 each carry the phosphoserine modification. Composition is skewed to basic and acidic residues over residues 622–631 and 639–654; these read ASEDAKKTEV and EPEK…KEEE. Threonine 674 carries the phosphothreonine modification. Phosphoserine is present on residues serine 678, serine 685, serine 688, serine 692, serine 696, serine 698, serine 700, serine 702, and serine 712. Low complexity predominate over residues 687-700; the sequence is TSGPLSPEGSPSKS. Basic residues predominate over residues 701-725; that stretch reads PSKKKKKFRTPSFLKKSKKKEKVES. Residues 703–720 form an interaction with calmodulin region; the sequence is KKKKKFRTPSFLKKSKKK.

Belongs to the aldolase class II family. Adducin subfamily. Heterodimer of an alpha and a beta subunit. Found in a complex with ADD2, DMTN and SLC2A1. Interacts with SLC2A1. Found in liver, kidney, spleen, heart and brain.

The protein localises to the cytoplasm. It is found in the cytoskeleton. The protein resides in the cell membrane. In terms of biological role, membrane-cytoskeleton-associated protein that promotes the assembly of the spectrin-actin network. Binds to the erythrocyte membrane receptor SLC2A1/GLUT1 and may therefore provide a link between the spectrin cytoskeleton to the plasma membrane. Binds to calmodulin. Calmodulin binds preferentially to the beta subunit. The protein is Beta-adducin (Add2) of Rattus norvegicus (Rat).